A 505-amino-acid polypeptide reads, in one-letter code: Flagellin (505 aa).

This sequence belongs to the bacterial flagellin family.

Its subcellular location is the secreted. It is found in the bacterial flagellum. In terms of biological role, flagellin is the subunit protein which polymerizes to form the filaments of bacterial flagella. In Salmonella moscow, this protein is Flagellin (fliC).